The primary structure comprises 420 residues: Serine hydroxymethyltransferase (420 aa).

Residues Leu123 and 127 to 129 (GHL) each bind (6S)-5,6,7,8-tetrahydrofolate. At Lys232 the chain carries N6-(pyridoxal phosphate)lysine. 357 to 359 (SPF) serves as a coordination point for (6S)-5,6,7,8-tetrahydrofolate.

The protein belongs to the SHMT family. In terms of assembly, homodimer. Requires pyridoxal 5'-phosphate as cofactor.

The protein localises to the cytoplasm. It catalyses the reaction (6R)-5,10-methylene-5,6,7,8-tetrahydrofolate + glycine + H2O = (6S)-5,6,7,8-tetrahydrofolate + L-serine. Its pathway is one-carbon metabolism; tetrahydrofolate interconversion. It participates in amino-acid biosynthesis; glycine biosynthesis; glycine from L-serine: step 1/1. Functionally, catalyzes the reversible interconversion of serine and glycine with tetrahydrofolate (THF) serving as the one-carbon carrier. This reaction serves as the major source of one-carbon groups required for the biosynthesis of purines, thymidylate, methionine, and other important biomolecules. Also exhibits THF-independent aldolase activity toward beta-hydroxyamino acids, producing glycine and aldehydes, via a retro-aldol mechanism. The sequence is that of Serine hydroxymethyltransferase from Streptococcus pyogenes serotype M12 (strain MGAS2096).